The following is an 87-amino-acid chain: Acyl-CoA-binding protein (87 aa).

The ACB domain maps to 3-87 (LKEEFEEHAV…KVKQLLEESA (85 aa)). Residues 30–34 (YGLYK), Lys56, and Tyr75 each bind an acyl-CoA.

Belongs to the ACBP family.

Functionally, binds medium- and long-chain acyl-CoA esters with very high affinity and may function as an intracellular carrier of acyl-CoA esters. The protein is Acyl-CoA-binding protein (ACABP) of Fritillaria agrestis (Stinkbells).